The chain runs to 297 residues: MGFVKVVKNKAYFKRYQVRFRRRREGKTDYYARKRLVIQDKNKYNTPKYRMIVRVTNRDIICQIAYARIEGDMIVCAAYAHELPKYGVKVGLTNYAAAYCTGLLLARRLLNRFGMDKIYEGQVEVNGGEYNVESIDGQPGAFTCYLDAGLARTTTGNKVFGALKGAVDGGLSIPHSTKRFPGYDSESKEFNAEVHRKHIMGQNVADYMRYLMEEDEDAYKKQFSQYIKNNVTPDMMEEMYKKAHAAIRENPVYEKKPKREVKKKRWNRPKMSLAQKKDRVAQKKASFLRAQERAAES.

N-acetylglycine is present on Gly2. N6-acetyllysine is present on residues Lys5 and Lys48. Ser185 is modified (phosphoserine). At Lys220 the chain carries N6-acetyllysine; alternate. Lys220 is covalently cross-linked (Glycyl lysine isopeptide (Lys-Gly) (interchain with G-Cter in SUMO1); alternate). Residue Lys220 forms a Glycyl lysine isopeptide (Lys-Gly) (interchain with G-Cter in SUMO2); alternate linkage. Thr232 is modified (phosphothreonine). Residues 253–297 (YEKKPKREVKKKRWNRPKMSLAQKKDRVAQKKASFLRAQERAAES) form a disordered region. Basic residues predominate over residues 258-268 (KREVKKKRWNR). Ser272 carries the phosphoserine modification.

This sequence belongs to the universal ribosomal protein uL18 family. In terms of assembly, component of the large ribosomal subunit (LSU). Part of the 5S RNP complex, which is a LSU subcomplex composed of the 5S RNA, RPL5 and RPL11. Component of a hexameric 5S RNP precursor complex, composed of 5S RNA, RRS1, RPF2/BXDC1, RPL5, RPL11 and HEATR3; this complex acts as a precursor for ribosome assembly. Interacts with NVL in an ATP-dependent manner. Interacts with RRP1B. Interacts with IPO5, IPO7 and KPNB1; these interactions may be involved in RPL5 nuclear import for the assembly of ribosomal subunits.

Its subcellular location is the cytoplasm. It localises to the nucleus. The protein resides in the nucleolus. Component of the ribosome, a large ribonucleoprotein complex responsible for the synthesis of proteins in the cell. The small ribosomal subunit (SSU) binds messenger RNAs (mRNAs) and translates the encoded message by selecting cognate aminoacyl-transfer RNA (tRNA) molecules. The large subunit (LSU) contains the ribosomal catalytic site termed the peptidyl transferase center (PTC), which catalyzes the formation of peptide bonds, thereby polymerizing the amino acids delivered by tRNAs into a polypeptide chain. The nascent polypeptides leave the ribosome through a tunnel in the LSU and interact with protein factors that function in enzymatic processing, targeting, and the membrane insertion of nascent chains at the exit of the ribosomal tunnel. As part of the 5S RNP/5S ribonucleoprotein particle it is an essential component of the LSU, required for its formation and the maturation of rRNAs. It also couples ribosome biogenesis to p53/TP53 activation. As part of the 5S RNP it accumulates in the nucleoplasm and inhibits MDM2, when ribosome biogenesis is perturbed, mediating the stabilization and the activation of TP53. This Mus musculus (Mouse) protein is Large ribosomal subunit protein uL18 (Rpl5).